Reading from the N-terminus, the 89-residue chain is Small ribosomal subunit protein uS15 (89 aa).

It belongs to the universal ribosomal protein uS15 family. As to quaternary structure, part of the 30S ribosomal subunit. Forms a bridge to the 50S subunit in the 70S ribosome, contacting the 23S rRNA.

Its function is as follows. One of the primary rRNA binding proteins, it binds directly to 16S rRNA where it helps nucleate assembly of the platform of the 30S subunit by binding and bridging several RNA helices of the 16S rRNA. Functionally, forms an intersubunit bridge (bridge B4) with the 23S rRNA of the 50S subunit in the ribosome. In Porphyromonas gingivalis (strain ATCC 33277 / DSM 20709 / CIP 103683 / JCM 12257 / NCTC 11834 / 2561), this protein is Small ribosomal subunit protein uS15.